Consider the following 848-residue polypeptide: Crooked neck-like protein 1 (848 aa).

The residue at position 2 (Thr-2) is an N-acetylalanine. Positions 81-106 (RSSRTPHSTRCRKEDAQPGHHGNGAA) are disordered. HAT repeat units lie at residues 222-254 (DYKL…WEES), 256-288 (KEIQ…MEMK), 290-322 (RQVN…MEEM), 324-355 (GNVA…FELR), 357-388 (KEVD…FEEK), 390-425 (AYFA…FEEN), 427-461 (KEFE…FEKK), 471-503 (IIVS…LVES), 505-539 (AEAE…LWIN), 549-585 (KDPE…FEIR), 587-618 (KNLS…LELQ), 620-652 (REFD…LETI), 654-688 (GDID…FEIE), 690-721 (EETE…FELS), 726-767 (GSLT…EFGT), 769-807 (SDKE…YIFP), and 809-834 (DAAN…EKED). The tract at residues 411 to 628 (MDEHLYVAFA…LREFDRCRKL (218 aa)) is mediates interaction with HSP90. A Phosphoserine modification is found at Ser-503. Residues 827-848 (KQQQEKEDAEHHPDEDVDESES) form a disordered region. The span at 828-840 (QQQEKEDAEHHPD) shows a compositional bias: basic and acidic residues.

Belongs to the crooked-neck family. As to quaternary structure, identified in the spliceosome C complex. Present in a spliceosome complex assembled in vitro containing CRNKL1, HPRP8BP and SNRPB2. Component of the minor spliceosome, which splices U12-type introns. Isoform 2 seems to be predominant in the spliceosome complex. Interacts with PPIL2 (via the PPIase cyclophilin-type domain); they may form a trimeric complex with HSP90. Widely expressed. Highly expressed in testis. Not detected in brain and lung.

Its subcellular location is the nucleus. The protein localises to the nucleus speckle. Functionally, involved in pre-mRNA splicing process. As a component of the minor spliceosome, involved in the splicing of U12-type introns in pre-mRNAs. In Homo sapiens (Human), this protein is Crooked neck-like protein 1 (CRNKL1).